A 176-amino-acid chain; its full sequence is MSSKQEPVVLGKLGSSHGIKGWLKITTYTDSVEGIFDYSPWLLKEQGEWREVKVLQWRMQGKAVVACLEGVETRDQAQALTNCEIAVTPEQMEVLPEDEFYWRDLIGCEVVNTKGYNMGKVQEIVETGSNDVLLVKANAKDGFGKAERMIPFVTEQFIQKVDLTAKQILVDWDPDF.

The PRC barrel domain maps to 96–176 (PEDEFYWRDL…QILVDWDPDF (81 aa)).

It belongs to the RimM family. In terms of assembly, binds ribosomal protein uS19.

The protein resides in the cytoplasm. An accessory protein needed during the final step in the assembly of 30S ribosomal subunit, possibly for assembly of the head region. Essential for efficient processing of 16S rRNA. May be needed both before and after RbfA during the maturation of 16S rRNA. It has affinity for free ribosomal 30S subunits but not for 70S ribosomes. In Shewanella piezotolerans (strain WP3 / JCM 13877), this protein is Ribosome maturation factor RimM.